Reading from the N-terminus, the 166-residue chain is Ribosome maturation factor RimM (166 aa).

Residues 90 to 163 (EGQYFIKDII…KIVIKAVEEW (74 aa)) enclose the PRC barrel domain.

The protein belongs to the RimM family. As to quaternary structure, binds ribosomal protein uS19.

It is found in the cytoplasm. Functionally, an accessory protein needed during the final step in the assembly of 30S ribosomal subunit, possibly for assembly of the head region. Essential for efficient processing of 16S rRNA. May be needed both before and after RbfA during the maturation of 16S rRNA. It has affinity for free ribosomal 30S subunits but not for 70S ribosomes. The chain is Ribosome maturation factor RimM from Clostridium acetobutylicum (strain ATCC 824 / DSM 792 / JCM 1419 / IAM 19013 / LMG 5710 / NBRC 13948 / NRRL B-527 / VKM B-1787 / 2291 / W).